A 334-amino-acid polypeptide reads, in one-letter code: Cytoskeleton protein RodZ (334 aa).

At 1–111 the chain is on the cytoplasmic side; sequence MNTEATHDQN…LGKRRKKRDG (111 aa). The region spanning 19 to 71 is the HTH cro/C1-type domain; that stretch reads LRNAREQLGLSQQAVAERLCLKVSTVRDIEEDKAPSDLASTFLRGYIRSYARL. The H-T-H motif DNA-binding region spans 30 to 49; the sequence is QQAVAERLCLKVSTVRDIEE. Residues 112 to 132 form a helical; Signal-anchor for type II membrane protein membrane-spanning segment; it reads WLMSFTWLVLFVVVGLTGAWW. Residues 133 to 334 lie on the Periplasmic side of the membrane; the sequence is WQNHKAQQEE…TLNAEPTPAQ (202 aa). Positions 155 to 241 are disordered; that stretch reads NADKDSGQSV…PSALPTSQAG (87 aa). Low complexity-rich tracts occupy residues 170–211 and 219–241; these read AATS…TVVA and TAATSAAPAATETPSALPTSQAG.

This sequence belongs to the RodZ family.

The protein localises to the cell inner membrane. In terms of biological role, cytoskeletal protein that is involved in cell-shape control through regulation of the length of the long axis. The polypeptide is Cytoskeleton protein RodZ (Salmonella agona (strain SL483)).